A 795-amino-acid polypeptide reads, in one-letter code: Phenylalanine--tRNA ligase beta subunit (795 aa).

In terms of domain architecture, tRNA-binding spans 39–148 (AGSFHGVVVG…ADAPIGTDIR (110 aa)). The region spanning 401–476 (PKRATITLRR…RVYGYNNIPD (76 aa)) is the B5 domain. Positions 454, 460, 463, and 464 each coordinate Mg(2+). Residues 701–794 (SRFPANRRDI…LKERFQASLR (94 aa)) form the FDX-ACB domain.

It belongs to the phenylalanyl-tRNA synthetase beta subunit family. Type 1 subfamily. As to quaternary structure, tetramer of two alpha and two beta subunits. Requires Mg(2+) as cofactor.

Its subcellular location is the cytoplasm. The enzyme catalyses tRNA(Phe) + L-phenylalanine + ATP = L-phenylalanyl-tRNA(Phe) + AMP + diphosphate + H(+). In Escherichia coli (strain K12), this protein is Phenylalanine--tRNA ligase beta subunit (pheT).